The following is a 202-amino-acid chain: MTTHFTKEAFDTFEIEGLEQRMDAIRERIQPVFKQIGQEVSPDLTVNLAEDMYVHIAQHARRKVNPPKDTWMAFSPNKRGYKKHPHFQVGLFDDHLFIWLAYIYELPNKSQYATKLLNHQELLHALPSDFVVSYDHMKKEAQQIDETGLEQGLVRFRDVKKAEFLVGRHVSAEEVSAMSHEDLVKLIRNTYEQLVPIYKKIQ.

Belongs to the UPF0637 family.

This chain is UPF0637 protein Exig_2520, found in Exiguobacterium sibiricum (strain DSM 17290 / CCUG 55495 / CIP 109462 / JCM 13490 / 255-15).